The primary structure comprises 766 residues: BMP/retinoic acid-inducible neural-specific protein 3 (766 aa).

The signal sequence occupies residues 1-33 (MIWRRRAGAELSSLMALWEWIVLSLHCWVLAVA). The 191-residue stretch at 74 to 264 (RYKIYREFGR…FVQAALSYIA (191 aa)) folds into the MACPF domain. Residues asparagine 168, asparagine 337, asparagine 456, asparagine 562, asparagine 609, and asparagine 641 are each glycosylated (N-linked (GlcNAc...) asparagine).

This sequence belongs to the BRINP family. As to expression, expressed in the brain. Weakly expressed in embryonic stem (ES) cells. Expressed in ES-derived neural stem cells (NSCs) and neuronal cells.

It is found in the secreted. The protein resides in the mitochondrion. Inhibits neuronal cell proliferation by negative regulation of the cell cycle transition. Promotes pituitary gonadotrope cell proliferation, migration and invasion, when overexpressed. May play a role in cell pituitary tumor development. The protein is BMP/retinoic acid-inducible neural-specific protein 3 (Brinp3) of Mus musculus (Mouse).